Here is a 498-residue protein sequence, read N- to C-terminus: Protein YhjJ (498 aa).

The signal sequence occupies residues 1-24 (MQGTKIRLLAGGLLMMATAGYVQA).

The protein belongs to the peptidase M16 family.

The protein resides in the periplasm. This Escherichia coli (strain K12) protein is Protein YhjJ (yhjJ).